Here is a 194-residue protein sequence, read N- to C-terminus: Imidazoleglycerol-phosphate dehydratase (194 aa).

The protein belongs to the imidazoleglycerol-phosphate dehydratase family.

Its subcellular location is the cytoplasm. The catalysed reaction is D-erythro-1-(imidazol-4-yl)glycerol 3-phosphate = 3-(imidazol-4-yl)-2-oxopropyl phosphate + H2O. It functions in the pathway amino-acid biosynthesis; L-histidine biosynthesis; L-histidine from 5-phospho-alpha-D-ribose 1-diphosphate: step 6/9. This is Imidazoleglycerol-phosphate dehydratase from Caldanaerobacter subterraneus subsp. tengcongensis (strain DSM 15242 / JCM 11007 / NBRC 100824 / MB4) (Thermoanaerobacter tengcongensis).